Consider the following 286-residue polypeptide: Protein METABOLIC NETWORK MODULATOR 1 (286 aa).

Over residues Met1 to Asn10 the composition is skewed to basic and acidic residues. 3 disordered regions span residues Met1–Ala60, Val123–Val146, and Gly181–Ser204. Basic residues predominate over residues Lys20–Gln29. Residues Leu30 to Leu39 are compositionally biased toward basic and acidic residues. Positions Lys131–Glu140 are enriched in basic residues. Over residues Pro191–Ser204 the composition is skewed to polar residues.

Mailny observed in young seedlings and in emerging leaves.

Its function is as follows. Lineage-specific modulator of primary metabolism. Influences flowering time. The protein is Protein METABOLIC NETWORK MODULATOR 1 of Arabidopsis thaliana (Mouse-ear cress).